Here is a 182-residue protein sequence, read N- to C-terminus: P21 prophage-derived terminase small subunit (182 aa).

Ser31–Gly36 lines the ATP pocket.

This sequence belongs to the terminase small subunit family. As to quaternary structure, heterooligomer of gp1 and gp2.

Its function is as follows. Involved in the initiation of the phage DNA packaging into the prohead. Processes replicating concatemeric DNA into pieces of unit length with cohesive ends. The protein is P21 prophage-derived terminase small subunit (nohA) of Escherichia coli O6:H1 (strain CFT073 / ATCC 700928 / UPEC).